Consider the following 308-residue polypeptide: Methionyl-tRNA formyltransferase (308 aa).

110–113 (SLLP) contributes to the (6S)-5,6,7,8-tetrahydrofolate binding site.

The protein belongs to the Fmt family.

It catalyses the reaction L-methionyl-tRNA(fMet) + (6R)-10-formyltetrahydrofolate = N-formyl-L-methionyl-tRNA(fMet) + (6S)-5,6,7,8-tetrahydrofolate + H(+). In terms of biological role, attaches a formyl group to the free amino group of methionyl-tRNA(fMet). The formyl group appears to play a dual role in the initiator identity of N-formylmethionyl-tRNA by promoting its recognition by IF2 and preventing the misappropriation of this tRNA by the elongation apparatus. The chain is Methionyl-tRNA formyltransferase from Neisseria meningitidis serogroup C (strain 053442).